The primary structure comprises 280 residues: Energy-coupling factor transporter ATP-binding protein EcfA2 (280 aa).

The ABC transporter domain occupies 3–245 (ISLENVSYTY…VAFLKEKQLG (243 aa)). 40-47 (GHTGSGKS) contacts ATP.

The protein belongs to the ABC transporter superfamily. Energy-coupling factor EcfA family. Forms a stable energy-coupling factor (ECF) transporter complex composed of 2 membrane-embedded substrate-binding proteins (S component), 2 ATP-binding proteins (A component) and 2 transmembrane proteins (T component).

The protein resides in the cell membrane. ATP-binding (A) component of a common energy-coupling factor (ECF) ABC-transporter complex. Unlike classic ABC transporters this ECF transporter provides the energy necessary to transport a number of different substrates. The polypeptide is Energy-coupling factor transporter ATP-binding protein EcfA2 (Streptococcus thermophilus (strain CNRZ 1066)).